Consider the following 252-residue polypeptide: MFAEIITVGDELLTGNTVNSNSAHIAKKLTERGYLVKRITTVGDDVEDIRSVILESLNRKPDVLIISGGLGPTHDDVTMVAVAKALGKELVLCEKCLEEIKEFYERLYREGLIDDPTLNDARKKMAYLPKGAIPLKNSVGAAPGAYIEYRGTKIFVLPGMPREMKAMLEEEVLPRIGSKKFVQKKYLAEITDESKLAPILEETIKIFDVKIHSSPKGFGKFIGIIIFAQDEDTIKKAVEFMKSKGIEFREGW.

It belongs to the CinA family.

The protein is Protein PF0476 of Pyrococcus furiosus (strain ATCC 43587 / DSM 3638 / JCM 8422 / Vc1).